The primary structure comprises 70 residues: Cytochrome c oxidase subunit 8B, mitochondrial (70 aa).

A mitochondrion-targeting transit peptide spans 1 to 24; it reads MLRLAPTVRLLQAPLRGWAVPKAH. Residues 25-35 lie on the Mitochondrial matrix side of the membrane; it reads ITAKPAKTPTS. The chain crosses the membrane as a helical span at residues 36-59; sequence PKEQAIGLSVTFLSFLLPAGWVLY. Over 60–70 the chain is Mitochondrial intermembrane; that stretch reads HLDNYKKSSAA.

The protein belongs to the cytochrome c oxidase VIII family. In terms of assembly, component of the cytochrome c oxidase (complex IV, CIV), a multisubunit enzyme composed of 14 subunits. The complex is composed of a catalytic core of 3 subunits MT-CO1, MT-CO2 and MT-CO3, encoded in the mitochondrial DNA, and 11 supernumerary subunits COX4I1 (or COX4I2), COX5A, COX5B, COX6A2 (or COX6A1), COX6B1 (or COX6B2), COX6C, COX7A1 (or COX7A2), COX7B, COX7C, COX8B and NDUFA4, which are encoded in the nuclear genome. The complex exists as a monomer or a dimer and forms supercomplexes (SCs) in the inner mitochondrial membrane with NADH-ubiquinone oxidoreductase (complex I, CI) and ubiquinol-cytochrome c oxidoreductase (cytochrome b-c1 complex, complex III, CIII), resulting in different assemblies (supercomplex SCI(1)III(2)IV(1) and megacomplex MCI(2)III(2)IV(2)).

The protein localises to the mitochondrion inner membrane. It participates in energy metabolism; oxidative phosphorylation. Component of the cytochrome c oxidase, the last enzyme in the mitochondrial electron transport chain which drives oxidative phosphorylation. The respiratory chain contains 3 multisubunit complexes succinate dehydrogenase (complex II, CII), ubiquinol-cytochrome c oxidoreductase (cytochrome b-c1 complex, complex III, CIII) and cytochrome c oxidase (complex IV, CIV), that cooperate to transfer electrons derived from NADH and succinate to molecular oxygen, creating an electrochemical gradient over the inner membrane that drives transmembrane transport and the ATP synthase. Cytochrome c oxidase is the component of the respiratory chain that catalyzes the reduction of oxygen to water. Electrons originating from reduced cytochrome c in the intermembrane space (IMS) are transferred via the dinuclear copper A center (CU(A)) of subunit 2 and heme A of subunit 1 to the active site in subunit 1, a binuclear center (BNC) formed by heme A3 and copper B (CU(B)). The BNC reduces molecular oxygen to 2 water molecules using 4 electrons from cytochrome c in the IMS and 4 protons from the mitochondrial matrix. The sequence is that of Cytochrome c oxidase subunit 8B, mitochondrial (COX8B) from Bos taurus (Bovine).